The sequence spans 30 residues: Uperin-6.2 (30 aa).

Expressed by the skin dorsal glands.

The protein resides in the secreted. In Uperoleia inundata (Floodplain toadlet), this protein is Uperin-6.2.